Here is a 218-residue protein sequence, read N- to C-terminus: Glutathione S-transferase-like protein OpS6 (218 aa).

A GST N-terminal domain is found at 5 to 86; the sequence is QPIKLYAHKK…YLIEQYDKDG (82 aa). One can recognise a GST C-terminal domain in the interval 92–218; it reads SLQDKSLARA…KIAATKAALA (127 aa).

Belongs to the GST superfamily.

Its pathway is secondary metabolite biosynthesis. Functionally, glutathione S-transferase-like protein; part of the gene cluster that mediates the biosynthesis of the bibenzoquinone oosporein, a metabolite required for fungal virulence that acts by evading host immunity to facilitate fungal multiplication in insects. The non-reducing polyketide synthase OpS1 produces orsellinic acid by condensing acetyl-CoA with 3 malonyl-CoA units. Orsellinic acid is then hydroxylated to benzenetriol by the hydroxylase OpS4. The intermediate is oxidized either nonenzymatically to 5,5'-dideoxy-oosporein or enzymatically to benzenetetrol by the oxidoreductase OpS7. The latter is further dimerized to oosporein by the catalase OpS5. OpS6 probably functions en route for protecting cells against oxidative stress by scavenging any leaked free radical form of benzenetetrol by activating the thiol group of glutathione. The sequence is that of Glutathione S-transferase-like protein OpS6 from Beauveria bassiana (strain ARSEF 2860) (White muscardine disease fungus).